The following is a 996-amino-acid chain: Filament-like plant protein 5 (996 aa).

Residues 1-20 (MEGRGWPWKRKSSDKATTEK) are disordered. Coiled coils occupy residues 59-94 (THMS…TKES), 133-248 (TAED…KYDL), 280-301 (VKKI…RKKL), and 359-387 (LTRR…LQVS). 2 disordered regions span residues 409–482 (NNDK…SSSR) and 496–534 (VGSD…DEDT). Residues 417–428 (SNSRNLSESLSS) show a composition bias toward low complexity. Positions 471 to 482 (VNGSSKPRSSSR) are enriched in polar residues. The span at 503 to 527 (ANSASKSSNSVCSRRSVEKQSSSKS) shows a compositional bias: low complexity. Coiled-coil stretches lie at residues 601–622 (QNSE…VANI), 737–841 (DSSC…FTTE), and 876–906 (NQEK…QSLQ). The tract at residues 962–996 (IMKSSSVSSSSKEDNEKHTRGLGRFFSSKSKNSAR) is disordered.

The protein belongs to the FPP family. Interacts with WPP/MAF proteins.

The polypeptide is Filament-like plant protein 5 (FPP5) (Arabidopsis thaliana (Mouse-ear cress)).